The sequence spans 67 residues: ATP synthase protein 8 (67 aa).

A helical membrane pass occupies residues 8–24 (TWSITIMSMIMTLFIVF). Lys54 carries the N6-acetyllysine; alternate modification. The residue at position 54 (Lys54) is an N6-succinyllysine; alternate. N6-acetyllysine is present on Lys57.

It belongs to the ATPase protein 8 family. As to quaternary structure, F-type ATPases have 2 components, CF(1) - the catalytic core - and CF(0) - the membrane proton channel. Component of an ATP synthase complex composed of ATP5PB, ATP5MC1, ATP5F1E, ATP5PD, ATP5ME, ATP5PF, ATP5MF, MT-ATP6, MT-ATP8, ATP5F1A, ATP5F1B, ATP5F1D, ATP5F1C, ATP5PO, ATP5MG, ATP5MK and ATP5MJ. Interacts with PRICKLE3.

It is found in the mitochondrion membrane. Functionally, mitochondrial membrane ATP synthase (F(1)F(0) ATP synthase or Complex V) produces ATP from ADP in the presence of a proton gradient across the membrane which is generated by electron transport complexes of the respiratory chain. F-type ATPases consist of two structural domains, F(1) - containing the extramembraneous catalytic core and F(0) - containing the membrane proton channel, linked together by a central stalk and a peripheral stalk. During catalysis, ATP synthesis in the catalytic domain of F(1) is coupled via a rotary mechanism of the central stalk subunits to proton translocation. Part of the complex F(0) domain. Minor subunit located with subunit a in the membrane. The protein is ATP synthase protein 8 (MT-ATP8) of Felis silvestris lybica (African wildcat).